A 333-amino-acid polypeptide reads, in one-letter code: Chlorophyllide reductase 35.5 kDa chain (333 aa).

Positions 1 to 17 (MTDAPELKAFDQRLRDE) are enriched in basic and acidic residues. The disordered stretch occupies residues 1–30 (MTDAPELKAFDQRLRDEAAEEPTLEVPQGE). Residues 45–50 (GIGKSF) and Lys74 contribute to the ATP site. Residue Ser49 coordinates Mg(2+). [4Fe-4S] cluster contacts are provided by Cys130 and Cys165. 219–220 (NK) contributes to the ATP binding site.

It belongs to the NifH/BchL/ChlL family. Homodimer. Chlorophyllide reductase is composed of three subunits; BchX, BchY and BchZ. Requires [4Fe-4S] cluster as cofactor.

The enzyme catalyses 3-deacetyl-3-vinylbacteriochlorophyllide a + 2 oxidized [2Fe-2S]-[ferredoxin] + ADP + phosphate = chlorophyllide a + 2 reduced [2Fe-2S]-[ferredoxin] + ATP + H2O + H(+). The catalysed reaction is bacteriochlorophyllide a + 2 oxidized [2Fe-2S]-[ferredoxin] + ADP + phosphate = 3-acetyl-3-devinylchlorophyllide a + 2 reduced [2Fe-2S]-[ferredoxin] + ATP + H2O + H(+). It catalyses the reaction 3-deacetyl-3-(1-hydroxyethyl)bacteriochlorophyllide a + 2 oxidized [2Fe-2S]-[ferredoxin] + ADP + phosphate = 3-devinyl-3-(1-hydroxyethyl)chlorophyllide a + 2 reduced [2Fe-2S]-[ferredoxin] + ATP + H2O + H(+). Its pathway is porphyrin-containing compound metabolism; bacteriochlorophyll biosynthesis. Functionally, converts chlorophylls (Chl) into bacteriochlorophylls (BChl) by reducing ring B of the tetrapyrrole. In Cereibacter sphaeroides (strain ATCC 17023 / DSM 158 / JCM 6121 / CCUG 31486 / LMG 2827 / NBRC 12203 / NCIMB 8253 / ATH 2.4.1.) (Rhodobacter sphaeroides), this protein is Chlorophyllide reductase 35.5 kDa chain (bchX).